Consider the following 255-residue polypeptide: Ribosomal RNA small subunit methyltransferase A (255 aa).

Positions 12, 14, 39, 60, 81, and 103 each coordinate S-adenosyl-L-methionine.

Belongs to the class I-like SAM-binding methyltransferase superfamily. rRNA adenine N(6)-methyltransferase family. RsmA subfamily.

The protein localises to the cytoplasm. It carries out the reaction adenosine(1518)/adenosine(1519) in 16S rRNA + 4 S-adenosyl-L-methionine = N(6)-dimethyladenosine(1518)/N(6)-dimethyladenosine(1519) in 16S rRNA + 4 S-adenosyl-L-homocysteine + 4 H(+). Functionally, specifically dimethylates two adjacent adenosines (A1518 and A1519) in the loop of a conserved hairpin near the 3'-end of 16S rRNA in the 30S particle. May play a critical role in biogenesis of 30S subunits. This Variovorax paradoxus (strain S110) protein is Ribosomal RNA small subunit methyltransferase A.